The primary structure comprises 147 residues: Small ribosomal subunit protein uS5 (147 aa).

Positions 9-72 constitute an S5 DRBM domain; sequence FEEVIVDIGR…DDAFKNIIHV (64 aa).

Belongs to the universal ribosomal protein uS5 family. In terms of assembly, part of the 30S ribosomal subunit. Contacts proteins S4 and S8.

Functionally, with S4 and S12 plays an important role in translational accuracy. In terms of biological role, located at the back of the 30S subunit body where it stabilizes the conformation of the head with respect to the body. The protein is Small ribosomal subunit protein uS5 of Campylobacter concisus (strain 13826).